The following is a 346-amino-acid chain: Small ribosomal subunit biogenesis GTPase RsgA 2 (346 aa).

A CP-type G domain is found at 93 to 248 (EEQLIAANFD…VIDTPGMREF (156 aa)). Residues 138–141 (TKAD) and 190–198 (GSSGVGKSS) each bind GTP. C271, C276, H278, and C284 together coordinate Zn(2+).

It belongs to the TRAFAC class YlqF/YawG GTPase family. RsgA subfamily. Monomer. Associates with 30S ribosomal subunit, binds 16S rRNA. The cofactor is Zn(2+).

The protein resides in the cytoplasm. In terms of biological role, one of several proteins that assist in the late maturation steps of the functional core of the 30S ribosomal subunit. Helps release RbfA from mature subunits. May play a role in the assembly of ribosomal proteins into the subunit. Circularly permuted GTPase that catalyzes slow GTP hydrolysis, GTPase activity is stimulated by the 30S ribosomal subunit. This Listeria monocytogenes serotype 4b (strain F2365) protein is Small ribosomal subunit biogenesis GTPase RsgA 2.